Consider the following 156-residue polypeptide: Neuroactive polyprotein R15 (156 aa).

An N-terminal signal peptide occupies residues 1 to 26; the sequence is MDSAGLHINFRLSHVLTVVTCILYIL. The propeptide occupies 27–48; sequence PPTTTAYSLPAPGKAAFQHQLS. C74 and C81 are oxidised to a cystine. Q120 is modified (pyrrolidone carboxylic acid).

As to expression, expressed within the abdominal ganglion in neurons R15, RB(HE), the two L9(G) gill motoneurons, and L40 interneuron, all are parts of autonomic control circuit that contributes to implementing a central command to coordinate autonomic activity with escape locomotion.

It localises to the secreted. In terms of biological role, the alpha-1 peptide acts as an osmoregulatory peptide, increasing blood volume, and also modulates the activity of a set of cardiac motor neurons that control heart rate. This Aplysia californica (California sea hare) protein is Neuroactive polyprotein R15.